The sequence spans 603 residues: Elongation factor 4 (603 aa).

Positions 7–189 constitute a tr-type G domain; that stretch reads VRIRNFCIIA…AVVERIPPPP (183 aa). GTP-binding positions include 19–24 and 136–139; these read DHGKST and NKID.

The protein belongs to the TRAFAC class translation factor GTPase superfamily. Classic translation factor GTPase family. LepA subfamily.

The protein localises to the cell inner membrane. It carries out the reaction GTP + H2O = GDP + phosphate + H(+). In terms of biological role, required for accurate and efficient protein synthesis under certain stress conditions. May act as a fidelity factor of the translation reaction, by catalyzing a one-codon backward translocation of tRNAs on improperly translocated ribosomes. Back-translocation proceeds from a post-translocation (POST) complex to a pre-translocation (PRE) complex, thus giving elongation factor G a second chance to translocate the tRNAs correctly. Binds to ribosomes in a GTP-dependent manner. The sequence is that of Elongation factor 4 from Trichormus variabilis (strain ATCC 29413 / PCC 7937) (Anabaena variabilis).